The sequence spans 85 residues: Conotoxin Lt28.5 (85 aa).

A signal peptide spans 1-21; sequence MPKLEMMLLVLLILPLCYIDA. Residues 22–40 constitute a propeptide that is removed on maturation; it reads VGPPPPWNMEDEIIEHWQK.

The protein belongs to the conotoxin D superfamily. Contains 5 disulfide bonds. As to expression, expressed by the venom duct.

It localises to the secreted. Its function is as follows. Probable neurotoxin. This is Conotoxin Lt28.5 from Conus litteratus (Lettered cone).